Reading from the N-terminus, the 386-residue chain is MLSGSPGQTPPAPFPSPPPPAPAQPPPPFPQFHVKSGLQIRKNAITDDYKVTSQVLGLGINGKVLRIFDKRTQQKFALKMLQDCPKARREVELHWRASQCPHIVHIVDVYENLYAGRKCLLIVMECLDGGELFSRIQDRGDQAFTEREASEIMKSIGEAIQYLHSINIAHRDVKPENLLYTSKRPNAILKLTDFGFAKETTSHNSLTTPCYTPYYVAPEVLGPEKYDKSCDMWSLGVIMYILLCGYPPFYSNHGLAISPGMKTRIRMGQYEFPNPEWSEVSEEVKMLIRNLLKTEPTQRMTITEFMNHPWIMQSTKVPQTPLHTSRVLKEDKERWEDVKEEMTSALATMRVDYEQIKIKKIEDASNPLLLKRRKKARAVEDAALAH.

A disordered region spans residues 1 to 29 (MLSGSPGQTPPAPFPSPPPPAPAQPPPPF). Pro residues predominate over residues 8 to 29 (QTPPAPFPSPPPPAPAQPPPPF). In terms of domain architecture, Protein kinase spans 50–311 (KVTSQVLGLG…ITEFMNHPWI (262 aa)). Residues 56–64 (LGLGINGKV) and Lys79 contribute to the ATP site. 125–127 (ECL) serves as a coordination point for staurosporine. Asp172 (proton acceptor) is an active-site residue. At Thr208 the chain carries Phosphothreonine; by MAPK14. Residue Ser258 is modified to Phosphoserine; by MAPK14. A Phosphoserine; by autocatalysis modification is found at Ser314. The interval 314 to 350 (STKVPQTPLHTSRVLKEDKERWEDVKEEMTSALATMR) is autoinhibitory helix. The residue at position 320 (Thr320) is a Phosphothreonine; by MAPK14. 2 short sequence motifs (nuclear export signal (NES)) span residues 331–354 (DKERWEDVKEEMTSALATMRVDYE) and 342–351 (MTSALATMRV). Residue Lys339 forms a Glycyl lysine isopeptide (Lys-Gly) (interchain with G-Cter in SUMO) linkage. Residues 352–376 (DYEQIKIKKIEDASNPLLLKRRKKA) form a p38 MAPK-binding site region. Short sequence motifs (bipartite nuclear localization signal) lie at residues 357 to 360 (KIKK) and 371 to 375 (KRRKK).

Belongs to the protein kinase superfamily. CAMK Ser/Thr protein kinase family. Heterodimer with p38-alpha/MAPK14; this heterodimer forms a stable complex: molecules are positioned 'face to face' so that the ATP-binding sites of both kinases are at the heterodimer interface. Interacts with PHC2. Interacts with HSF1. Sumoylation inhibits the protein kinase activity. In terms of processing, phosphorylated and activated by MAP kinase p38-alpha/MAPK14 at Thr-208; Ser-258 and Thr-320. In terms of tissue distribution, ubiquitously expressed (at protein level).

It localises to the cytoplasm. It is found in the nucleus. The catalysed reaction is L-seryl-[protein] + ATP = O-phospho-L-seryl-[protein] + ADP + H(+). The enzyme catalyses L-threonyl-[protein] + ATP = O-phospho-L-threonyl-[protein] + ADP + H(+). Its activity is regulated as follows. Activated following phosphorylation by p38-alpha/MAPK14 following various stresses. Inhibited following sumoylation. Specifically inhibited by pyrrolopyridine inhibitors. Functionally, stress-activated serine/threonine-protein kinase involved in cytokine production, endocytosis, reorganization of the cytoskeleton, cell migration, cell cycle control, chromatin remodeling, DNA damage response and transcriptional regulation. Following stress, it is phosphorylated and activated by MAP kinase p38-alpha/MAPK14, leading to phosphorylation of substrates. Phosphorylates serine in the peptide sequence, Hyd-X-R-X(2)-S, where Hyd is a large hydrophobic residue. Phosphorylates ALOX5, CDC25B, CDC25C, CEP131, ELAVL1, HNRNPA0, HSP27/HSPB1, KRT18, KRT20, LIMK1, LSP1, PABPC1, PARN, PDE4A, RCSD1, RPS6KA3, TAB3 and TTP/ZFP36. Phosphorylates HSF1; leading to the interaction with HSP90 proteins and inhibiting HSF1 homotrimerization, DNA-binding and transactivation activities. Mediates phosphorylation of HSP27/HSPB1 in response to stress, leading to dissociation of HSP27/HSPB1 from large small heat-shock protein (sHsps) oligomers and impairment of their chaperone activities and ability to protect against oxidative stress effectively. Involved in inflammatory response by regulating tumor necrosis factor (TNF) and IL6 production post-transcriptionally: acts by phosphorylating AU-rich elements (AREs)-binding proteins ELAVL1, HNRNPA0, PABPC1 and TTP/ZFP36, leading to regulation of the stability and translation of TNF and IL6 mRNAs. Phosphorylation of TTP/ZFP36, a major post-transcriptional regulator of TNF, promotes its binding to 14-3-3 proteins and reduces its ARE mRNA affinity leading to inhibition of dependent degradation of ARE-containing transcripts. Phosphorylates CEP131 in response to cellular stress following ultraviolet irradiation which promotes binding of CEP131 to 14-3-3 proteins and inhibits formation of novel centriolar satellites. Also involved in late G2/M checkpoint following DNA damage through a process of post-transcriptional mRNA stabilization: following DNA damage, relocalizes from nucleus to cytoplasm and phosphorylates HNRNPA0 and PARN, leading to stabilization of GADD45A mRNA. Involved in toll-like receptor signaling pathway (TLR) in dendritic cells: required for acute TLR-induced macropinocytosis by phosphorylating and activating RPS6KA3. The sequence is that of MAP kinase-activated protein kinase 2 (Mapkapk2) from Mus musculus (Mouse).